A 334-amino-acid chain; its full sequence is Glyceraldehyde-3-phosphate dehydrogenase (334 aa).

Residues 12–13 (TI) and glycine 111 each bind NAD(+). D-glyceraldehyde 3-phosphate is bound at residue 140–142 (SCN). The active-site Nucleophile is the cysteine 141. Arginine 167 is a binding site for NAD(+). D-glyceraldehyde 3-phosphate is bound at residue 192–193 (HG). Glutamine 298 lines the NAD(+) pocket.

The protein belongs to the glyceraldehyde-3-phosphate dehydrogenase family. In terms of assembly, homotetramer.

It is found in the cytoplasm. It carries out the reaction D-glyceraldehyde 3-phosphate + phosphate + NADP(+) = (2R)-3-phospho-glyceroyl phosphate + NADPH + H(+). The enzyme catalyses D-glyceraldehyde 3-phosphate + phosphate + NAD(+) = (2R)-3-phospho-glyceroyl phosphate + NADH + H(+). It functions in the pathway carbohydrate degradation; glycolysis; pyruvate from D-glyceraldehyde 3-phosphate: step 1/5. In Thermococcus onnurineus (strain NA1), this protein is Glyceraldehyde-3-phosphate dehydrogenase.